The following is a 1272-amino-acid chain: Vitamin B12-dependent ribonucleotide reductase (1272 aa).

Substrate contacts are provided by residues serine 153, 198 to 199, glycine 230, 474 to 478, and 675 to 679; these read AC, NPCSE, and PTGTI. Cysteine 199 and cysteine 487 are joined by a disulfide. Residue asparagine 474 is the Proton acceptor of the active site. Cysteine 476 acts as the Cysteine radical intermediate in catalysis. Glutamate 478 serves as the catalytic Proton acceptor. The tract at residues 1120–1147 is disordered; sequence TLVSSNEGDRAASEPKGSATAAPARGSA.

Belongs to the ribonucleoside diphosphate reductase class-2 family. Adenosylcob(III)alamin serves as cofactor.

It carries out the reaction a 2'-deoxyribonucleoside 5'-diphosphate + [thioredoxin]-disulfide + H2O = a ribonucleoside 5'-diphosphate + [thioredoxin]-dithiol. Its function is as follows. Catalyzes the reduction of ribonucleotides to deoxyribonucleotides. May function to provide a pool of deoxyribonucleotide precursors for DNA repair during oxygen limitation and/or for immediate growth after restoration of oxygen. In Agrobacterium fabrum (strain C58 / ATCC 33970) (Agrobacterium tumefaciens (strain C58)), this protein is Vitamin B12-dependent ribonucleotide reductase (nrdJ).